An 83-amino-acid chain; its full sequence is Gas vesicle protein G2 (83 aa).

The protein belongs to the gas vesicle GvpG family. In terms of assembly, gvpF to GvpM interact with each other in vitro, and may form multi-subunit complex(es).

It is found in the gas vesicle. Its function is as follows. Proteins GvpF to GvpM might be involved in nucleating gas vesicle formation. A minor component of the gas vesicle. Gas vesicles are hollow, gas filled proteinaceous nanostructures found in several microbial planktonic microorganisms. They allow positioning of halobacteria at the optimal depth for growth in the poorly aerated, shallow brine pools of their habitat. Functionally, expression of 2 c-vac DNA fragments containing 2 divergently transcribed regions (gvpE-gvpF-gvpG-gvpH-gvpI-gvpJ-gvpK-gvpL-gvpM and gvpA-gvpC-gvpN-gvpO) allows H.volcanii to produce gas vesicles. The protein is Gas vesicle protein G2 of Halobacterium salinarum (strain ATCC 700922 / JCM 11081 / NRC-1) (Halobacterium halobium).